We begin with the raw amino-acid sequence, 313 residues long: Ribose-phosphate pyrophosphokinase (313 aa).

ATP is bound by residues 37–39 and 96–97; these read DGE and RQ. H131 and D170 together coordinate Mg(2+). K193 is an active-site residue. D-ribose 5-phosphate is bound by residues R195, D219, and 223 to 227; that span reads DTAGT.

The protein belongs to the ribose-phosphate pyrophosphokinase family. Class I subfamily. Homohexamer. The cofactor is Mg(2+).

It localises to the cytoplasm. The catalysed reaction is D-ribose 5-phosphate + ATP = 5-phospho-alpha-D-ribose 1-diphosphate + AMP + H(+). It functions in the pathway metabolic intermediate biosynthesis; 5-phospho-alpha-D-ribose 1-diphosphate biosynthesis; 5-phospho-alpha-D-ribose 1-diphosphate from D-ribose 5-phosphate (route I): step 1/1. Its function is as follows. Involved in the biosynthesis of the central metabolite phospho-alpha-D-ribosyl-1-pyrophosphate (PRPP) via the transfer of pyrophosphoryl group from ATP to 1-hydroxyl of ribose-5-phosphate (Rib-5-P). The chain is Ribose-phosphate pyrophosphokinase from Pseudomonas syringae pv. tomato (strain ATCC BAA-871 / DC3000).